The sequence spans 1358 residues: DNA-directed RNA polymerase subunit beta (1358 aa).

It belongs to the RNA polymerase beta chain family. As to quaternary structure, the RNAP catalytic core consists of 2 alpha, 1 beta, 1 beta' and 1 omega subunit. When a sigma factor is associated with the core the holoenzyme is formed, which can initiate transcription.

It catalyses the reaction RNA(n) + a ribonucleoside 5'-triphosphate = RNA(n+1) + diphosphate. In terms of biological role, DNA-dependent RNA polymerase catalyzes the transcription of DNA into RNA using the four ribonucleoside triphosphates as substrates. This is DNA-directed RNA polymerase subunit beta from Neorickettsia sennetsu (strain ATCC VR-367 / Miyayama) (Ehrlichia sennetsu).